We begin with the raw amino-acid sequence, 492 residues long: Probable cobyric acid synthase (492 aa).

A GATase cobBQ-type domain is found at 252–444 (PIEVNIVKFS…FHGILENFEF (193 aa)). C330 acts as the Nucleophile in catalysis. H436 is an active-site residue.

It belongs to the CobB/CobQ family. CobQ subfamily.

The protein operates within cofactor biosynthesis; adenosylcobalamin biosynthesis. Its function is as follows. Catalyzes amidations at positions B, D, E, and G on adenosylcobyrinic A,C-diamide. NH(2) groups are provided by glutamine, and one molecule of ATP is hydrogenolyzed for each amidation. The protein is Probable cobyric acid synthase of Methanococcus maripaludis (strain C6 / ATCC BAA-1332).